Here is a 362-residue protein sequence, read N- to C-terminus: Ferrochelatase (362 aa).

Histidine 228 and glutamate 309 together coordinate Fe cation.

This sequence belongs to the ferrochelatase family.

The protein resides in the cytoplasm. It catalyses the reaction heme b + 2 H(+) = protoporphyrin IX + Fe(2+). It functions in the pathway porphyrin-containing compound metabolism; protoheme biosynthesis; protoheme from protoporphyrin-IX: step 1/1. Functionally, catalyzes the ferrous insertion into protoporphyrin IX. This is Ferrochelatase from Bordetella parapertussis (strain 12822 / ATCC BAA-587 / NCTC 13253).